Consider the following 131-residue polypeptide: Phosphoribosyl-AMP cyclohydrolase (131 aa).

Asp78 serves as a coordination point for Mg(2+). Zn(2+) is bound at residue Cys79. Asp80 and Asp82 together coordinate Mg(2+). Positions 96 and 103 each coordinate Zn(2+).

The protein belongs to the PRA-CH family. Homodimer. Mg(2+) is required as a cofactor. The cofactor is Zn(2+).

Its subcellular location is the cytoplasm. It carries out the reaction 1-(5-phospho-beta-D-ribosyl)-5'-AMP + H2O = 1-(5-phospho-beta-D-ribosyl)-5-[(5-phospho-beta-D-ribosylamino)methylideneamino]imidazole-4-carboxamide. The protein operates within amino-acid biosynthesis; L-histidine biosynthesis; L-histidine from 5-phospho-alpha-D-ribose 1-diphosphate: step 3/9. Its function is as follows. Catalyzes the hydrolysis of the adenine ring of phosphoribosyl-AMP. In Neisseria gonorrhoeae (strain ATCC 700825 / FA 1090), this protein is Phosphoribosyl-AMP cyclohydrolase.